The sequence spans 89 residues: Small ribosomal subunit protein uS15 (89 aa).

Belongs to the universal ribosomal protein uS15 family. As to quaternary structure, part of the 30S ribosomal subunit. Forms a bridge to the 50S subunit in the 70S ribosome, contacting the 23S rRNA.

Its function is as follows. One of the primary rRNA binding proteins, it binds directly to 16S rRNA where it helps nucleate assembly of the platform of the 30S subunit by binding and bridging several RNA helices of the 16S rRNA. In terms of biological role, forms an intersubunit bridge (bridge B4) with the 23S rRNA of the 50S subunit in the ribosome. In Synechocystis sp. (strain ATCC 27184 / PCC 6803 / Kazusa), this protein is Small ribosomal subunit protein uS15.